Reading from the N-terminus, the 286-residue chain is Nucleotide-binding protein HCH_05324 (286 aa).

8 to 15 lines the ATP pocket; sequence GRSGSGKS. 60 to 63 serves as a coordination point for GTP; sequence DARN.

Belongs to the RapZ-like family.

Its function is as follows. Displays ATPase and GTPase activities. The protein is Nucleotide-binding protein HCH_05324 of Hahella chejuensis (strain KCTC 2396).